Here is a 521-residue protein sequence, read N- to C-terminus: Probable glycogen synthase (521 aa).

It belongs to the glycosyltransferase 1 family. Bacterial/plant glycogen synthase subfamily.

The catalysed reaction is [(1-&gt;4)-alpha-D-glucosyl](n) + ADP-alpha-D-glucose = [(1-&gt;4)-alpha-D-glucosyl](n+1) + ADP + H(+). The protein operates within glycan biosynthesis; glycogen biosynthesis. Synthesizes alpha-1,4-glucan chains using ADP-glucose. This Methanocaldococcus jannaschii (strain ATCC 43067 / DSM 2661 / JAL-1 / JCM 10045 / NBRC 100440) (Methanococcus jannaschii) protein is Probable glycogen synthase (glgA).